Here is a 924-residue protein sequence, read N- to C-terminus: Bifunctional glutamine synthetase adenylyltransferase/adenylyl-removing enzyme (924 aa).

Positions 1-422 are adenylyl removase; the sequence is MQTKGCRFFM…QFKKLIQEEV (422 aa). An adenylyl transferase region spans residues 424–924; the sequence is SPDETDTELE…PASTMALESE (501 aa).

The protein belongs to the GlnE family. The cofactor is Mg(2+).

It carries out the reaction [glutamine synthetase]-O(4)-(5'-adenylyl)-L-tyrosine + phosphate = [glutamine synthetase]-L-tyrosine + ADP. The catalysed reaction is [glutamine synthetase]-L-tyrosine + ATP = [glutamine synthetase]-O(4)-(5'-adenylyl)-L-tyrosine + diphosphate. Involved in the regulation of glutamine synthetase GlnA, a key enzyme in the process to assimilate ammonia. When cellular nitrogen levels are high, the C-terminal adenylyl transferase (AT) inactivates GlnA by covalent transfer of an adenylyl group from ATP to specific tyrosine residue of GlnA, thus reducing its activity. Conversely, when nitrogen levels are low, the N-terminal adenylyl removase (AR) activates GlnA by removing the adenylyl group by phosphorolysis, increasing its activity. The regulatory region of GlnE binds the signal transduction protein PII (GlnB) which indicates the nitrogen status of the cell. In Acinetobacter baylyi (strain ATCC 33305 / BD413 / ADP1), this protein is Bifunctional glutamine synthetase adenylyltransferase/adenylyl-removing enzyme.